A 358-amino-acid chain; its full sequence is D-alanine--D-alanine ligase (358 aa).

Residues 136-341 (KYILQAAGVP…YGDLIEELIQ (206 aa)) form the ATP-grasp domain. 169–224 (EGSLLYPMFVKPANMGSSVGISKAENREELQNALALAYQYDSRAIVEQGIEAREIE) contributes to the ATP binding site. Residues Asp295, Glu308, and Asn310 each contribute to the Mg(2+) site.

The protein belongs to the D-alanine--D-alanine ligase family. Mg(2+) serves as cofactor. The cofactor is Mn(2+).

Its subcellular location is the cytoplasm. The catalysed reaction is 2 D-alanine + ATP = D-alanyl-D-alanine + ADP + phosphate + H(+). It participates in cell wall biogenesis; peptidoglycan biosynthesis. Functionally, cell wall formation. This Enterococcus hirae (strain ATCC 9790 / DSM 20160 / JCM 8729 / LMG 6399 / NBRC 3181 / NCIMB 6459 / NCDO 1258 / NCTC 12367 / WDCM 00089 / R) protein is D-alanine--D-alanine ligase.